The sequence spans 842 residues: Cullin-8 (842 aa).

The tract at residues 1 to 50 (MINESVSKREGFHESISRETSASNALGLYNKFNDERNPRYRTMIAELHEF) is required for interaction with MMS1. Residues 755 to 765 (LQSSNTGGERT) show a composition bias toward polar residues. A disordered region spans residues 755–775 (LQSSNTGGERTSSAHHEGSNS). Lys791 is covalently cross-linked (Glycyl lysine isopeptide (Lys-Gly) (interchain with G-Cter in NEDD8)).

Belongs to the cullin family. Component of multiple cullin-RING ligases (CRLs) composed of 4 subunits: the RING protein HRT1, the cullin RTT101, a linker protein MMS1, and one of many alternative substrate receptors belonging to a protein family described as DCAF (DDB1- and CUL4-associated factor). Component of a RTT101(MMS1-MMS22) complex with the substrate receptor MMS22. This complex further interacts with RTT107 and CTF4 to form RTT101-MMS1-MMS22-RTT107 and RTT101-MMS1-MMS22-CTF4 complexes respectively. Component of a RTT101(MSS1-CRT10) complex with the substrate receptor CRT10. Component of a RTT101(MSS1-ESC2) complex with the potential substrate receptor ESC2. Component of a RTT101(MSS1-ORC5) complex with the potential substrate receptor ORC5. Interacts (via C-ter) with HRT1; required for ubiquitin-ligase activity. Interacts (via N-ter) with MMS1. In terms of processing, neddylated. HRT1-binding is necessary for RUB1/NEDD8 modification of RTT101. The modification enhances ubiquitin-ligase activity.

It localises to the cytoplasm. The protein resides in the nucleus. It functions in the pathway protein modification; protein ubiquitination. Core component of multiple cullin-RING-based E3 ubiquitin-protein ligase complexes (CRLs), which mediate the ubiquitination of target proteins. As a scaffold protein may contribute to catalysis through positioning of the substrate and the ubiquitin-conjugating enzyme. The CRL associates with CDC34 as the E2 ubiquitin-conjugating enzyme. The functional specificity of the CRL depends on the type of the associated substrate receptor protein. RTT101(MMS1-MMS22) promotes fork progression through damaged DNA or natural pause sites by stabilizing replication proteins like the replication fork-pausing complex (FPC) and leading-strand polymerase at stalled replication forks. RTT101(MMS1-MMS22) ubiquitinates the acetylated histones H3K56ac-H4 at lysine residues H3K121, H3K122 and H3K125. Ubiquitination is required for efficient histone deposition during replication-coupled nucleosome assembly, probably by facilitating the transfer of H3-H4 from ASF1 to other chaperones involved in histone deposition. RTT101(MMS1-CRT10) may regulate nucleotide synthesis through transcriptional regulation of ribonucleotide reductase. RTT101(MMS1) is also involved in the non-functional rRNA decay (NRD) of 25S rRNA through the selective, ubiquitination-dependent degradation of nonfunctional ribosomal particles. Ubiquitinates the FACT (facilitates chromatin transcription) complex subunit SPT16 in an MMS1-independent manner. Involved in regulation of Ty1 transposition and protects the genome from Ty1 integration upstream of tRNA genes. This is Cullin-8 (RTT101) from Saccharomyces cerevisiae (strain ATCC 204508 / S288c) (Baker's yeast).